Reading from the N-terminus, the 99-residue chain is Small ribosomal subunit protein eS24 (99 aa).

The protein belongs to the eukaryotic ribosomal protein eS24 family.

This Pyrococcus abyssi (strain GE5 / Orsay) protein is Small ribosomal subunit protein eS24.